The following is a 474-amino-acid chain: Neuronal acetylcholine receptor subunit eat-2 (474 aa).

The first 21 residues, 1 to 21 (MTLKIAFFTLILLVSIERVYS), serve as a signal peptide directing secretion. The Extracellular segment spans residues 22–237 (SDEEYRLLKD…MHLKRRTMYY (216 aa)). N-linked (GlcNAc...) asparagine glycosylation is present at N95. A disulfide bridge links C149 with C163. The next 3 helical transmembrane spans lie at 238-258 (GLNW…GFTM), 266-286 (ITLQ…VSEV), and 303-323 (LSIV…NIFF). The Cytoplasmic portion of the chain corresponds to 324-440 (RHPKTHRMGD…WRFMAMVIDR (117 aa)). Residues 359–378 (PRREEEKNDEEAGGDGTKLL) form a disordered region. Residues 441 to 461 (LSLFLFTGLIFGTTALIFAFC) form a helical membrane-spanning segment.

Belongs to the ligand-gated ion channel (TC 1.A.9) family. Acetylcholine receptor (TC 1.A.9.1) subfamily. As to quaternary structure, neuronal AChR seems to be composed of two different type of subunits: alpha and beta. As to expression, expressed in pharyngeal muscle.

The protein resides in the postsynaptic cell membrane. Its subcellular location is the cell membrane. In terms of biological role, after binding acetylcholine, the AChR responds by an extensive change in conformation that affects all subunits and leads to opening of an ion-conducting channel across the plasma membrane. Nicotinic acetylcholine receptor in the MC pharyngeal motor neuron involved in pharyngeal pumping. Has a role in the determination of life span possibly via calorific restriction which affects growth rate, although this is independent of metabolic activity. Plays a role in the defense against the accumulation of ingested live pathogenic bacteria in the intestine. In Caenorhabditis elegans, this protein is Neuronal acetylcholine receptor subunit eat-2.